A 184-amino-acid chain; its full sequence is Ribosome-recycling factor (184 aa).

The disordered stretch occupies residues 141–164 (DEKNGDITEDDLRSQTEDVQKATD).

The protein belongs to the RRF family.

The protein resides in the cytoplasm. Functionally, responsible for the release of ribosomes from messenger RNA at the termination of protein biosynthesis. May increase the efficiency of translation by recycling ribosomes from one round of translation to another. This Staphylococcus haemolyticus (strain JCSC1435) protein is Ribosome-recycling factor.